The primary structure comprises 110 residues: MESRATVKVQRISARKARLVADLIRYKSANDALSILYNTNKKASALFIKLLNSAVANAINNHGMNNEKLVVEKVLVNEGPTLKRFQPRSQGRAYSIFKRTSHLEIVLKEK.

The protein belongs to the universal ribosomal protein uL22 family. Part of the 50S ribosomal subunit.

Functionally, this protein binds specifically to 23S rRNA; its binding is stimulated by other ribosomal proteins, e.g. L4, L17, and L20. It is important during the early stages of 50S assembly. It makes multiple contacts with different domains of the 23S rRNA in the assembled 50S subunit and ribosome. In terms of biological role, the globular domain of the protein is located near the polypeptide exit tunnel on the outside of the subunit, while an extended beta-hairpin is found that lines the wall of the exit tunnel in the center of the 70S ribosome. The chain is Large ribosomal subunit protein uL22 from Mycoplasma mobile (strain ATCC 43663 / 163K / NCTC 11711) (Mesomycoplasma mobile).